Here is a 469-residue protein sequence, read N- to C-terminus: uncharacterized protein (469 aa).

This is an uncharacterized protein from Methanocaldococcus jannaschii (strain ATCC 43067 / DSM 2661 / JAL-1 / JCM 10045 / NBRC 100440) (Methanococcus jannaschii).